The chain runs to 907 residues: Protein translocase subunit SecA (907 aa).

ATP contacts are provided by residues glutamine 87, 105–109 (GEGKT), and aspartate 510. Zn(2+) contacts are provided by cysteine 892, cysteine 894, cysteine 903, and histidine 904.

Belongs to the SecA family. Monomer and homodimer. Part of the essential Sec protein translocation apparatus which comprises SecA, SecYEG and auxiliary proteins SecDF-YajC and YidC. It depends on Zn(2+) as a cofactor.

The protein resides in the cell inner membrane. It localises to the cytoplasm. The enzyme catalyses ATP + H2O + cellular proteinSide 1 = ADP + phosphate + cellular proteinSide 2.. In terms of biological role, part of the Sec protein translocase complex. Interacts with the SecYEG preprotein conducting channel. Has a central role in coupling the hydrolysis of ATP to the transfer of proteins into and across the cell membrane, serving both as a receptor for the preprotein-SecB complex and as an ATP-driven molecular motor driving the stepwise translocation of polypeptide chains across the membrane. This chain is Protein translocase subunit SecA, found in Acinetobacter baumannii (strain AB0057).